A 439-amino-acid polypeptide reads, in one-letter code: Putative FBD-associated F-box protein At1g05080 (439 aa).

Residues 12 to 58 (EDRISVLPEDLLVVILDLLPTKDVVATMILSKRWLSIWTMVRTLEYT) enclose the F-box domain. The 51-residue stretch at 360–410 (SWKQPSHVPECLSSQLEIFEWRDYGDRIIEEEFLTYVLANSKRLKTATISL) folds into the FBD domain.

This chain is Putative FBD-associated F-box protein At1g05080, found in Arabidopsis thaliana (Mouse-ear cress).